A 502-amino-acid chain; its full sequence is MVVEEDSRLINLQHKYNPTMPEVVEELKRIWDISFPVAAMSILNYLKNMTSVVCMGRLGSLELAGGALAIGFTNITGYSVLSGLATGMEPLCGQAIGSKNPSLASLTLKRTIFLLLLASLPISLLWLNLAPLMLMLRQQHDITRVASLYCSFSLPDLLANSFLHPLRIYLRCKGTTWPLMWCTLVSVLLHLPITAFFTFYISLGVPGVAVSSFLTNFISLSLLLCYIYLENNNNDKTTSKSLCLDTPLMLYGSRDSGENDVWSTLVKFAVPSCIAVCLEWWWYEFMTVLAGYLPEPKVALAAAAIVIQTTSLMYTIPTALSAAVSTRVSNELGAGRPEKAKTAATVAVGAAVAVSVFGLVGTTVGREAWGKVFTADKVVLELTAAVIPVIGACELANCPQTISCGILRGSARPGIGAKINFYAFYVVGAPVAVVLAFVWGLGFMGLCYGLLGAQLACAISILTVVYNTDWNKESLKAHDLVGKNVISPNVDQIIVKCEEGLH.

12 helical membrane-spanning segments follow: residues 30 to 50 (IWDI…KNMT), 61 to 81 (LELA…YSVL), 112 to 132 (IFLL…LAPL), 145 to 165 (VASL…FLHP), 185 to 205 (VSVL…SLGV), 207 to 227 (GVAV…LCYI), 261 to 283 (VWST…WWWY), 298 to 318 (VALA…TIPT), 344 to 364 (ATVA…GTTV), 378 to 398 (VVLE…LANC), 419 to 439 (INFY…AFVW), and 447 to 467 (CYGL…VVYN).

It belongs to the multi antimicrobial extrusion (MATE) (TC 2.A.66.1) family.

Its subcellular location is the membrane. This Arabidopsis thaliana (Mouse-ear cress) protein is Protein DETOXIFICATION 55.